The primary structure comprises 40 residues: Hemoglobin subunit alpha-2 (40 aa).

In terms of domain architecture, Globin spans 1-40; that stretch reads VGPHLDDYGGEALHRNFEVYPQTKTYFPHFDASAGSNQLK.

Belongs to the globin family. Heterotetramer of two alpha chains and two beta chains. Red blood cells.

In terms of biological role, involved in oxygen transport from the lung to the various peripheral tissues. The polypeptide is Hemoglobin subunit alpha-2 (Saara hardwickii (Indian spiny-tailed lizard)).